A 180-amino-acid polypeptide reads, in one-letter code: Insulin-like growth factor 2 (180 aa).

An N-terminal signal peptide occupies residues 1–24 (MGIPMGKSMLVLLTFLAFASCCIA). Positions 25–52 (AYRPSETLCGGELVDTLQFVCGDRGFYF) are b. 3 cysteine pairs are disulfide-bonded: cysteine 33–cysteine 71, cysteine 45–cysteine 84, and cysteine 70–cysteine 75. The segment at 53–64 (SRPASRVSRRSR) is c. An a region spans residues 65 to 85 (GIVEECCFRSCDLALLETYCA). A d region spans residues 86-91 (TPAKSE). Residues 92 to 180 (RDVSTPPTVL…APPEMASNRK (89 aa)) constitute a propeptide, e peptide. O-linked (GalNAc...) threonine glycans are attached at residues threonine 96, threonine 99, and threonine 163. Residues 161–180 (LPTQDPAHGGAPPEMASNRK) are disordered.

This sequence belongs to the insulin family. In terms of assembly, interacts with MYORG; this interaction is required for IGF2 secretion. Interacts with integrins ITGAV:ITGB3 and ITGA6:ITGB4; integrin-binding is required for IGF2 signaling. Interacts with IGFBP2. O-glycosylated with core 1 or possibly core 8 glycans. Thr-96 is a minor glycosylation site compared to Thr-99. Post-translationally, proteolytically processed by PCSK4, proIGF2 is cleaved at Arg-128 and Arg-92 to generate big-IGF2 and mature IGF2. As to expression, expressed in heart, placenta, lung, liver, muscle, kidney, tongue, limb, eye and pancreas.

It localises to the secreted. The insulin-like growth factors possess growth-promoting activity. Major fetal growth hormone in mammals. Plays a key role in regulating fetoplacental development. IGF2 is influenced by placental lactogen. Also involved in tissue differentiation. In adults, involved in glucose metabolism in adipose tissue, skeletal muscle and liver. Acts as a ligand for integrin which is required for IGF2 signaling. Positively regulates myogenic transcription factor MYOD1 function by facilitating the recruitment of transcriptional coactivators, thereby controlling muscle terminal differentiation. Inhibits myoblast differentiation and modulates metabolism via increasing the mitochondrial respiration rate. Its function is as follows. Preptin undergoes glucose-mediated co-secretion with insulin, and acts as a physiological amplifier of glucose-mediated insulin secretion. Exhibits osteogenic properties by increasing osteoblast mitogenic activity through phosphoactivation of MAPK1 and MAPK3. This Homo sapiens (Human) protein is Insulin-like growth factor 2.